Reading from the N-terminus, the 251-residue chain is Probable transcriptional regulatory protein cauri_1421 (251 aa).

Residues 1-21 (MAGHSKWATTKHKKAANDAKR) form a disordered region.

This sequence belongs to the TACO1 family.

The protein resides in the cytoplasm. This chain is Probable transcriptional regulatory protein cauri_1421, found in Corynebacterium aurimucosum (strain ATCC 700975 / DSM 44827 / CIP 107346 / CN-1) (Corynebacterium nigricans).